A 63-amino-acid chain; its full sequence is Large ribosomal subunit protein bL32 (63 aa).

The disordered stretch occupies residues 1–27; it reads MANPKAKMSKSRRDKRRAQFNARTKPA. Residues 7 to 18 are compositionally biased toward basic residues; it reads KMSKSRRDKRRA.

This sequence belongs to the bacterial ribosomal protein bL32 family.

The chain is Large ribosomal subunit protein bL32 from Pelodictyon phaeoclathratiforme (strain DSM 5477 / BU-1).